The sequence spans 60 residues: Cytotoxin 2 (60 aa).

Cystine bridges form between C3–C21, C14–C38, C42–C53, and C54–C59.

It belongs to the three-finger toxin family. Short-chain subfamily. Type IA cytotoxin sub-subfamily. As to quaternary structure, monomer in solution; Homodimer and oligomer in the presence of negatively charged lipids forming a pore with a size ranging between 20 and 30 Angstroms. Expressed by the venom gland.

Its subcellular location is the secreted. It is found in the target cell membrane. Shows cytolytic activity on many different cells by forming pore in lipid membranes. In vivo, increases heart rate or kills the animal by cardiac arrest. In addition, it binds to heparin with high affinity, interacts with Kv channel-interacting protein 1 (KCNIP1) in a calcium-independent manner, and binds to integrin alpha-V/beta-3 (ITGAV/ITGB3) with moderate affinity. This is Cytotoxin 2 from Naja mossambica (Mozambique spitting cobra).